A 374-amino-acid polypeptide reads, in one-letter code: Queuine tRNA-ribosyltransferase (374 aa).

Aspartate 94 serves as the catalytic Proton acceptor. Substrate-binding positions include 94–98 (DSGGF), aspartate 148, glutamine 191, and glycine 218. Residues 249–255 (GVGSPDY) are RNA binding. Catalysis depends on aspartate 268, which acts as the Nucleophile. The segment at 273-277 (TRIGR) is RNA binding; important for wobble base 34 recognition. Positions 306, 308, 311, and 337 each coordinate Zn(2+).

Belongs to the queuine tRNA-ribosyltransferase family. Homodimer. Within each dimer, one monomer is responsible for RNA recognition and catalysis, while the other monomer binds to the replacement base PreQ1. The cofactor is Zn(2+).

It catalyses the reaction 7-aminomethyl-7-carbaguanine + guanosine(34) in tRNA = 7-aminomethyl-7-carbaguanosine(34) in tRNA + guanine. It participates in tRNA modification; tRNA-queuosine biosynthesis. Functionally, catalyzes the base-exchange of a guanine (G) residue with the queuine precursor 7-aminomethyl-7-deazaguanine (PreQ1) at position 34 (anticodon wobble position) in tRNAs with GU(N) anticodons (tRNA-Asp, -Asn, -His and -Tyr). Catalysis occurs through a double-displacement mechanism. The nucleophile active site attacks the C1' of nucleotide 34 to detach the guanine base from the RNA, forming a covalent enzyme-RNA intermediate. The proton acceptor active site deprotonates the incoming PreQ1, allowing a nucleophilic attack on the C1' of the ribose to form the product. After dissociation, two additional enzymatic reactions on the tRNA convert PreQ1 to queuine (Q), resulting in the hypermodified nucleoside queuosine (7-(((4,5-cis-dihydroxy-2-cyclopenten-1-yl)amino)methyl)-7-deazaguanosine). The chain is Queuine tRNA-ribosyltransferase from Acetivibrio thermocellus (strain ATCC 27405 / DSM 1237 / JCM 9322 / NBRC 103400 / NCIMB 10682 / NRRL B-4536 / VPI 7372) (Clostridium thermocellum).